A 461-amino-acid chain; its full sequence is Argininosuccinate lyase (461 aa).

Belongs to the lyase 1 family. Argininosuccinate lyase subfamily.

The protein resides in the cytoplasm. The enzyme catalyses 2-(N(omega)-L-arginino)succinate = fumarate + L-arginine. It functions in the pathway amino-acid biosynthesis; L-arginine biosynthesis; L-arginine from L-ornithine and carbamoyl phosphate: step 3/3. The protein is Argininosuccinate lyase of Syntrophotalea carbinolica (strain DSM 2380 / NBRC 103641 / GraBd1) (Pelobacter carbinolicus).